Consider the following 115-residue polypeptide: Aspartate 1-decarboxylase (115 aa).

The active-site Schiff-base intermediate with substrate; via pyruvic acid is S25. At S25 the chain carries Pyruvic acid (Ser). Position 57 (T57) interacts with substrate. Catalysis depends on Y58, which acts as the Proton donor. 73 to 75 serves as a coordination point for substrate; that stretch reads GPA.

It belongs to the PanD family. As to quaternary structure, heterooctamer of four alpha and four beta subunits. Pyruvate serves as cofactor. Is synthesized initially as an inactive proenzyme, which is activated by self-cleavage at a specific serine bond to produce a beta-subunit with a hydroxyl group at its C-terminus and an alpha-subunit with a pyruvoyl group at its N-terminus.

The protein resides in the cytoplasm. It carries out the reaction L-aspartate + H(+) = beta-alanine + CO2. It functions in the pathway cofactor biosynthesis; (R)-pantothenate biosynthesis; beta-alanine from L-aspartate: step 1/1. In terms of biological role, catalyzes the pyruvoyl-dependent decarboxylation of aspartate to produce beta-alanine. The sequence is that of Aspartate 1-decarboxylase from Cytophaga hutchinsonii (strain ATCC 33406 / DSM 1761 / CIP 103989 / NBRC 15051 / NCIMB 9469 / D465).